Consider the following 224-residue polypeptide: Thiamine-triphosphatase (224 aa).

At alanine 2 the chain carries N-acetylalanine. Positions 5 to 201 (LIEVERKFTP…AKLLVYLQRF (197 aa)) constitute a CYTH domain. Mg(2+) contacts are provided by glutamate 7 and glutamate 9. Residues lysine 11, arginine 55, arginine 57, lysine 65, and arginine 125 each contribute to the substrate site. The Mg(2+) site is built by aspartate 145, glutamate 157, and glutamate 159. Substrate is bound at residue glutamate 157. Lysine 193 contacts substrate.

Belongs to the ThTPase family. Monomer. Mg(2+) serves as cofactor.

It localises to the cytoplasm. The catalysed reaction is thiamine triphosphate + H2O = thiamine diphosphate + phosphate + H(+). In terms of biological role, hydrolase highly specific for thiamine triphosphate (ThTP). This Rattus norvegicus (Rat) protein is Thiamine-triphosphatase (Thtpa).